We begin with the raw amino-acid sequence, 383 residues long: Putative gustatory receptor 22c (383 aa).

At 1 to 11 (MFASRSDLQSR) the chain is on the cytoplasmic side. Residues 12 to 32 (LCWIILKATLYSSWFLGVFPY) form a helical membrane-spanning segment. At 33–45 (RFDSRNGQLKRSR) the chain is on the extracellular side. Residues 46–66 (FLLFYGLILNFFLLLKMVCSG) traverse the membrane as a helical segment. Residues 67-86 (GQKLGIPEAFARNSVLENTH) are Cytoplasmic-facing. The chain crosses the membrane as a helical span at residues 87–107 (YTTGMLAVFSCVVIHFLNFWG). The Extracellular segment spans residues 108-144 (STRVQDLANELLVLEYQQFASLNETKCPKFNSFVIQK). Residue Asn130 is glycosylated (N-linked (GlcNAc...) asparagine). The helical transmembrane segment at 145–165 (WLSVIGLLLSYLSIAYGLPGN) threads the bilayer. At 166-250 (NFSVEMVLIN…YMVATYEYHM (85 aa)) the chain is on the cytoplasmic side. A helical transmembrane segment spans residues 251 to 271 (TLVLTTGLASNFLAIYSWIVL). Topologically, residues 272–279 (DISMNINF) are extracellular. Residues 280–300 (IYLLIFPLFLLVNVWNLWLSI) form a helical membrane-spanning segment. Residues 301 to 360 (AASDLAENAGKSTQTVLKLFADLEVKDIELERSVNEFALLCGHCQFNFHVCGLFTINYKM) lie on the Cytoplasmic side of the membrane. A helical transmembrane segment spans residues 361–381 (GFQMIITSFLYLIYMIQFDFM). Residues 382–383 (NL) lie on the Extracellular side of the membrane.

It belongs to the insect chemoreceptor superfamily. Gustatory receptor (GR) family. Gr22e subfamily. Taste bristles in the foreleg and labial palps.

The protein localises to the cell membrane. Functionally, probable gustatory receptor which mediates acceptance or avoidance behavior, depending on its substrates. The sequence is that of Putative gustatory receptor 22c (Gr22c) from Drosophila melanogaster (Fruit fly).